The sequence spans 357 residues: MTSPLDGLIAEHAEIEGQLADPAVHNDPAKARALSRRYAQLAPVVDLARELDRVEGDLAAARELALLDPSFRDEVQDLGEELARLNDRLRAYLVPIDPDDARDAILEVKAGAGGEESALFAGDLLRMYLRYAERRGWKTEILDANPSDLGGYRDVSVAVKARGPAGPGDGVYGRLRFEGGVHRVQRVPVTESAGRIHTSAAGVLVLPEAEEVDVEIDPNDLRIDVFRSSGPGGQSVNTTDSAVRITHIPTGVVVSCQNEKSQLQNKESALRILRARLLGAAREKAESEASLARASQVRTVDRSERVRTYNFAENRISDHRVGYKAHNLDQVLDGELDEVLDALAAADLDARLAAQAS.

Gln234 is subject to N5-methylglutamine.

This sequence belongs to the prokaryotic/mitochondrial release factor family. Post-translationally, methylated by PrmC. Methylation increases the termination efficiency of RF1.

The protein resides in the cytoplasm. In terms of biological role, peptide chain release factor 1 directs the termination of translation in response to the peptide chain termination codons UAG and UAA. This Frankia casuarinae (strain DSM 45818 / CECT 9043 / HFP020203 / CcI3) protein is Peptide chain release factor 1.